A 716-amino-acid chain; its full sequence is Zinc finger protein on ecdysone puffs (716 aa).

2 disordered regions span residues 103-168 and 182-208; these read PSLL…GGIR and KNAN…ESPY. Residues 188-203 show a composition bias toward basic and acidic residues; that stretch reads KKKEPTPGEKKIESPT. A Phosphoserine modification is found at Ser-201. Position 203 is a phosphothreonine (Thr-203). Ser-206 bears the Phosphoserine mark. Residues 216 to 240 form a C2H2-type 1 zinc finger; the sequence is FYCHLCKKHMWDANSFENHIKGRTH. The segment at 288–310 adopts a C2H2-type 2; atypical zinc-finger fold; that stretch reads DYCTMCDLNFHGHISTHRKSEGH. The C2H2-type 3 zinc finger occupies 319–343; that stretch reads PKCIECNKEFATRIDYDTHLLSAEH. Basic and acidic residues predominate over residues 350-359; the sequence is NNTKVGERKR. The segment at 350–447 is disordered; it reads NNTKVGERKR…EEEEVALPVD (98 aa). Residues 379-383 carry the Nuclear localization signal motif; that stretch reads KRKKK. The segment covering 386 to 401 has biased composition (basic and acidic residues); sequence KKEGEAADGEAKKEGA. The span at 405–414 shows a compositional bias: acidic residues; the sequence is EGAEGDEAEG. The segment covering 415 to 431 has biased composition (basic and acidic residues); the sequence is EEAKEGEEAADETKEGD. The segment covering 432–447 has biased composition (acidic residues); that stretch reads ELNESQEEEEVALPVD. The C2H2-type 4 zinc finger occupies 489–513; it reads YECSVCSKFFDTEVTAEIHSRTATH. The tract at residues 534–716 is disordered; it reads RAAAALEENE…QRARGRYNRY (183 aa). Positions 541–551 are enriched in basic and acidic residues; that stretch reads ENERKKRKVEE. The short motif at 544 to 548 is the Nuclear localization signal element; that stretch reads RKKRK. A compositionally biased stretch (acidic residues) spans 560-638; that stretch reads AAEETTEGAE…GQEGEQEPEP (79 aa). Residues 639 to 656 are compositionally biased toward pro residues; it reads EPAPVQTPAPAEPAPPAK. The span at 657–704 shows a compositional bias: low complexity; it reads TPAKTPTKAAAPAAVASPAAAATSADASPSPAKKATPARAAAGAKATP. Phosphoserine occurs at positions 673, 684, and 686. Thr-692 carries the post-translational modification Phosphothreonine. The span at 707-716 shows a compositional bias: basic residues; the sequence is QRARGRYNRY.

It is found in the nucleus. It localises to the chromosome. In terms of biological role, may play a role in the process of early and late gene activation, or possibly in RNA processing, for a defined set of developmentally regulated loci. The protein is Zinc finger protein on ecdysone puffs (Pep) of Drosophila melanogaster (Fruit fly).